Consider the following 253-residue polypeptide: Uridylate kinase (253 aa).

9–12 is a binding site for ATP; sequence KLSG. Gly-51 provides a ligand contact to UMP. The ATP site is built by Gly-52 and Arg-56. UMP contacts are provided by residues Asp-72 and 133 to 140; that span reads SGNPFFTT. ATP contacts are provided by Thr-160, Tyr-166, and Asp-169.

This sequence belongs to the UMP kinase family. Homohexamer.

Its subcellular location is the cytoplasm. The enzyme catalyses UMP + ATP = UDP + ADP. The protein operates within pyrimidine metabolism; CTP biosynthesis via de novo pathway; UDP from UMP (UMPK route): step 1/1. With respect to regulation, inhibited by UTP. In terms of biological role, catalyzes the reversible phosphorylation of UMP to UDP. This chain is Uridylate kinase, found in Synechococcus sp. (strain JA-2-3B'a(2-13)) (Cyanobacteria bacterium Yellowstone B-Prime).